The chain runs to 652 residues: Nucleolar GTP-binding protein 1 (652 aa).

The region spanning 169 to 341 (RTIIICGFPN…VKTEACERLL (173 aa)) is the OBG-type G domain. Residues 175–182 (GFPNVGKS), 221–225 (DTPGI), and 289–292 (NKID) contribute to the GTP site. Positions 501-521 (RLSSRKNKPVIPRNKQPKVRD) are disordered.

This sequence belongs to the TRAFAC class OBG-HflX-like GTPase superfamily. OBG GTPase family. NOG subfamily.

Its subcellular location is the nucleus. The protein localises to the nucleolus. In terms of biological role, involved in the biogenesis of the 60S ribosomal subunit. Required for normal assembly of the mitotic spindle. May be involved in both centrosome-dependent and centrosome-independent spindle assembly programs. Acts as a TP53 repressor, preventing TP53 stabilization and cell cycle arrest. The protein is Nucleolar GTP-binding protein 1 of Drosophila melanogaster (Fruit fly).